Reading from the N-terminus, the 239-residue chain is Seed lectin beta chain (239 aa).

D-glucose-binding residues include D88 and G106. The Mn(2+) site is built by E126 and D128. Residues D128, N132, and D137 each coordinate Ca(2+). Mn(2+) is bound by residues D137 and H142. 2 residues coordinate D-glucose: G217 and A218.

The protein belongs to the leguminous lectin family. As to quaternary structure, tetramer consisting of heterodimers of alpha and beta chains.

Its function is as follows. Galactose-binding lectin. Agglutinates human erythrocytes, and requires Ca(2+) and Mn(2+) ions for full agglutinating activity. Has antifungal activity against Fusarium sp., A.niger and A.flavus. In Spatholobus parviflorus (Butea parviflora), this protein is Seed lectin beta chain.